A 793-amino-acid chain; its full sequence is Splicing factor 3A subunit 1 (793 aa).

The interval M1–I43 is disordered. Positions A8–P19 are enriched in pro residues. A Glycyl lysine isopeptide (Lys-Gly) (interchain with G-Cter in SUMO2) cross-link involves residue K20. Residues Q21–A34 are compositionally biased toward basic and acidic residues. The stretch at I52–Y94 is one SURP motif 1 repeat. K55 is subject to N6-acetyllysine. K131 is covalently cross-linked (Glycyl lysine isopeptide (Lys-Gly) (interchain with G-Cter in SUMO2)). An SURP motif 2 repeat occupies V166 to F208. A disordered region spans residues G318–H428. Phosphoserine is present on residues S320, S329, and S359. 2 stretches are compositionally biased toward acidic residues: residues S320 to D334 and D354 to E364. Over residues V368–P384 the composition is skewed to pro residues. The segment covering I388–A397 has biased composition (basic and acidic residues). S413 bears the Phosphoserine mark. K424 is covalently cross-linked (Glycyl lysine isopeptide (Lys-Gly) (interchain with G-Cter in SUMO2)). At S451 the chain carries Phosphoserine. A Phosphotyrosine modification is found at Y456. The segment covering I488–W502 has biased composition (basic and acidic residues). Disordered stretches follow at residues I488 to A518, H530 to P584, and A665 to E688. K499 is covalently cross-linked (Glycyl lysine isopeptide (Lys-Gly) (interchain with G-Cter in SUMO2)). S508 carries the phosphoserine modification. Over residues M509–A518 the composition is skewed to polar residues. K542 is covalently cross-linked (Glycyl lysine isopeptide (Lys-Gly) (interchain with G-Cter in SUMO2)). A compositionally biased stretch (pro residues) spans A665–P675. The tract at residues P680–K702 is required and sufficient for nuclear import. Residue K686 forms a Glycyl lysine isopeptide (Lys-Gly) (interchain with G-Cter in SUMO2) linkage. Positions I707–K793 constitute a Ubiquitin-like domain. Y759 is modified (phosphotyrosine).

In terms of assembly, component of the 17S U2 SnRNP complex, a ribonucleoprotein complex that contains small nuclear RNA (snRNA) U2 and a number of specific proteins. Part of the SF3A subcomplex of the 17S U2 SnRNP complex which is composed of three subunits; SF3A3/SAP61, SF3A2/SAP62 and SF3A1/SAP114. SF3A associates with the splicing factor SF3B and a 12S RNA unit to form the mature 17S U2 small nuclear ribonucleoprotein complex (17S U2 snRNP). SF3A1 functions as a scaffold that interacts directly with both SF3A2 and SF3A3. Identified in the spliceosome 'E' complex, a precursor of the spliceosome 'A' complex. Identified in the spliceosome 'A' and 'B' complexes. Identified in the spliceosome 'C' complex. Interacts with P2RX6; resulting in a reduction of the splicing activity. Ubiquitously expressed.

The protein localises to the nucleus. It localises to the nucleus speckle. Its function is as follows. Component of the 17S U2 SnRNP complex of the spliceosome, a large ribonucleoprotein complex that removes introns from transcribed pre-mRNAs. The 17S U2 SnRNP complex (1) directly participates in early spliceosome assembly and (2) mediates recognition of the intron branch site during pre-mRNA splicing by promoting the selection of the pre-mRNA branch-site adenosine, the nucleophile for the first step of splicing. Within the 17S U2 SnRNP complex, SF3A1 is part of the SF3A subcomplex that contributes to the assembly of the 17S U2 snRNP, and the subsequent assembly of the pre-spliceosome 'E' complex and the pre-catalytic spliceosome 'A' complex. Involved in pre-mRNA splicing as a component of pre-catalytic spliceosome 'B' complexes. This chain is Splicing factor 3A subunit 1 (SF3A1), found in Homo sapiens (Human).